The sequence spans 279 residues: Replication protein A 32 kDa subunit A (279 aa).

A disordered region spans residues Met-1–Thr-33. Over residues Met-19–Ser-32 the composition is skewed to low complexity. Positions Val-73 to Ile-148 form a DNA-binding region, OB.

It belongs to the replication factor A protein 2 family. In terms of assembly, heterotrimer of RPA1, RPA2 and RPA3 (canonical replication protein A complex). Interacts with ROS1. Binds to ASE1/At3g02920, PDX2, At5g62350, RPA1A/At2g06510, ARF1/At1g10630, At4g18590 and At3g52630. Post-translationally, phosphorylated in a cell-cycle-dependent manner (from the S phase until mitosis). In response to DNA damage, recruited to DNA-repair nuclear foci, as a hypophosphorylated form. In terms of tissue distribution, strongly expressed in shoot and root meristems. Present in seedlings, roots, leaves, siliques and flowers.

It localises to the nucleus. Functionally, component of the replication protein A complex (RPA) required for DNA recombination, repair and replication. The activity of RPA is mediated by single-stranded DNA binding and protein interactions. Required fo cell division in meristems. Involved in the maintenance of transcriptional epigenetic gene silencing (TGS) at specific loci (including some transposons) by regulating histone H3 acetylation, 'Lys-4' and 'Lys-9' methylation. The polypeptide is Replication protein A 32 kDa subunit A (RPA2A) (Arabidopsis thaliana (Mouse-ear cress)).